The following is a 365-amino-acid chain: MKKTALSAWHEGAGAKMIDFGGFLMPVQYSGIIAEHKAVREAAGLFDVSHMGNFYVRGERALEFLQYVTTNDLGKIVDGQAQYTLMLYPDGGIVDDLIIYRVSADTFFLIVNASNCEKDFAWLSDHVGGFEGVTLENRTSELSLIALQGPKAFEVLGRVFPEAGLDKLASFHFATVPFGGAEAMVARTGYTGEAGVEICLPNEEAEALWTALMAAGKNDGIQPIGLGARDTLRLEMGYSLYGHEIDQTVNPLEARLKWVVKMDKPNFIGKQACQQVELDPRKSVVGFSLDGRAIPRQHFKVYNSDKQEIGEVCSGTVSPTLQEPIGTASLLRDYAKTGTPIFVEIRGTFQPGTVRRLPFVHADRP.

It belongs to the GcvT family. In terms of assembly, the glycine cleavage system is composed of four proteins: P, T, L and H.

It catalyses the reaction N(6)-[(R)-S(8)-aminomethyldihydrolipoyl]-L-lysyl-[protein] + (6S)-5,6,7,8-tetrahydrofolate = N(6)-[(R)-dihydrolipoyl]-L-lysyl-[protein] + (6R)-5,10-methylene-5,6,7,8-tetrahydrofolate + NH4(+). Functionally, the glycine cleavage system catalyzes the degradation of glycine. The protein is Aminomethyltransferase of Chlorobaculum parvum (strain DSM 263 / NCIMB 8327) (Chlorobium vibrioforme subsp. thiosulfatophilum).